A 441-amino-acid polypeptide reads, in one-letter code: Membrane-bound protease PH1510 (441 aa).

Residues 1-20 (MRRILLSMIVLIFLASPILA) form the signal peptide. 64–67 (GGRA) is a binding site for substrate. The Nucleophile role is filled by serine 97. Substrate is bound at residue 119-124 (ACRPIL). The active-site Proton donor/acceptor is lysine 138. The next 4 helical transmembrane spans lie at 239–259 (VAYL…LTPG), 271–291 (IILA…ILLI), 307–327 (FGLF…LLFG), and 344–364 (ILII…MAAV).

The protein belongs to the peptidase S14 family. In terms of assembly, homodimer.

It is found in the membrane. With respect to regulation, inhibited by divalent metal cations, including Mg(2+), Mn(2+), Ca(2+) and Zn(2+). Mildly inhibited by 0.01 % SDS and 0.1% dodecyl-beta-D-maltoside. Activity is nearly abolished by 1 % SDS. Protease that cleaves its substrates preferentially near hydrophobic or aromatic amino acid residues. Can degrade casein and the stomatin homolog PH1511 (in vitro). This is Membrane-bound protease PH1510 from Pyrococcus horikoshii (strain ATCC 700860 / DSM 12428 / JCM 9974 / NBRC 100139 / OT-3).